We begin with the raw amino-acid sequence, 134 residues long: Lymphocyte antigen 6 complex locus protein G6d (134 aa).

Residues 1–19 form the signal peptide; that stretch reads MNSQLIGILFSALLGAALG. Positions 22–121 constitute a UPAR/Ly6 domain; that stretch reads MRCYDCGGGP…ASSSTPLCIL (100 aa). 5 disulfide bridges follow: Cys-24–Cys-48, Cys-27–Cys-35, Cys-42–Cys-76, Cys-82–Cys-101, and Cys-102–Cys-107. The O-linked (GalNAc...) threonine glycan is linked to Thr-68. Asn-108 is lipidated: GPI-anchor amidated asparagine. A propeptide spans 109–134 (removed in mature form); that stretch reads GAVASSSTPLCILAAVTTLAWLLSGQ.

As to quaternary structure, homodimer. In terms of processing, O-glycosylated.

It is found in the cell membrane. The protein is Lymphocyte antigen 6 complex locus protein G6d (Ly6g6d) of Rattus norvegicus (Rat).